A 303-amino-acid polypeptide reads, in one-letter code: MADKSKFTEYIDKALEKSKETALSHLFFTYQGIAYPITMCTSETFQALDTFEARHDDIVLASYPKCGSNWILHIVSELIYAVSKKKYKYPEFPVLECGDSEKYQRMKGFPSPRILATHLHYDKLPGSIFKNKAKILVIFRNPTDTAVSFFHFHNDVPDIPSYGSWDELFRQFMKGQVSWGSYFDFAINWNKHLDGDNVKFILYEDLKENLAAGIKQIPEFLGFFLTGEQIQTISVQSTFQAMRAKSQDTHGAVGPFLFRKGEVGDWKNLFSEIQNQEMDEKFKECLAGTSLGAKLKYESYCQG.

65–70 (KCGSNW) lines the 3'-phosphoadenylyl sulfate pocket. His-118 acts as the Proton acceptor in catalysis. 3'-phosphoadenylyl sulfate contacts are provided by residues Arg-140, Ser-148, Tyr-203, 237-242 (STFQAM), and 259-261 (RKG).

Belongs to the sulfotransferase 1 family.

The protein localises to the cytoplasm. It localises to the cytosol. It catalyses the reaction thyroxine + 3'-phosphoadenylyl sulfate = thyroxine sulfate + adenosine 3',5'-bisphosphate + H(+). Sulfotransferase that utilizes 3'-phospho-5'-adenylyl sulfate (PAPS) as sulfonate donor to catalyze the sulfate conjugation of thyroxine. Involved in the metabolism of thyroxine. This is Sulfotransferase 6B1 (SULT6B1) from Gorilla gorilla gorilla (Western lowland gorilla).